Reading from the N-terminus, the 205-residue chain is Holliday junction branch migration complex subunit RuvA (205 aa).

The domain I stretch occupies residues 1 to 64 (MIGRLRGLLV…EDAQLLYGFI (64 aa)). Positions 65–143 (TKQERALFRL…SLMEASHGNE (79 aa)) are domain II. Residues 144-156 (REFVLQSNYTPAP) form a flexible linker region. The interval 157–205 (VVNTAEEDAISALLALGYKPAQASKAVSSVFEEGMDSETLIKASLKSML) is domain III.

Belongs to the RuvA family. As to quaternary structure, homotetramer. Forms an RuvA(8)-RuvB(12)-Holliday junction (HJ) complex. HJ DNA is sandwiched between 2 RuvA tetramers; dsDNA enters through RuvA and exits via RuvB. An RuvB hexamer assembles on each DNA strand where it exits the tetramer. Each RuvB hexamer is contacted by two RuvA subunits (via domain III) on 2 adjacent RuvB subunits; this complex drives branch migration. In the full resolvosome a probable DNA-RuvA(4)-RuvB(12)-RuvC(2) complex forms which resolves the HJ.

The protein localises to the cytoplasm. Functionally, the RuvA-RuvB-RuvC complex processes Holliday junction (HJ) DNA during genetic recombination and DNA repair, while the RuvA-RuvB complex plays an important role in the rescue of blocked DNA replication forks via replication fork reversal (RFR). RuvA specifically binds to HJ cruciform DNA, conferring on it an open structure. The RuvB hexamer acts as an ATP-dependent pump, pulling dsDNA into and through the RuvAB complex. HJ branch migration allows RuvC to scan DNA until it finds its consensus sequence, where it cleaves and resolves the cruciform DNA. The protein is Holliday junction branch migration complex subunit RuvA of Shewanella loihica (strain ATCC BAA-1088 / PV-4).